Reading from the N-terminus, the 318-residue chain is Ubiquitin-like domain-containing CTD phosphatase 1 (318 aa).

Alanine 2 is modified (N-acetylalanine). A Ubiquitin-like domain is found at 3 to 81 (LPIIVKWGGQ…IMMMGTREES (79 aa)). N6-acetyllysine is present on lysine 117. The region spanning 133 to 294 (PREGKKLLVL…LKLTQYLKEI (162 aa)) is the FCP1 homology domain. The Mg(2+) site is built by aspartate 143, aspartate 145, and aspartate 253.

Mg(2+) serves as cofactor.

Its subcellular location is the nucleus. The catalysed reaction is O-phospho-L-seryl-[protein] + H2O = L-seryl-[protein] + phosphate. The enzyme catalyses O-phospho-L-threonyl-[protein] + H2O = L-threonyl-[protein] + phosphate. Dephosphorylates 26S nuclear proteasomes, thereby decreasing their proteolytic activity. Recruited to the 19S regulatory particle of the 26S proteasome through its interaction with 19S component PSMD2/RPN1. Once recruited, dephosphorylates 19S component PSMC2/RPT1 which impairs PSMC2 ATPase activity and disrupts 26S proteasome assembly. Has also been reported to stimulate the proteolytic activity of the 26S proteasome. This chain is Ubiquitin-like domain-containing CTD phosphatase 1 (UBLCP1), found in Pongo abelii (Sumatran orangutan).